The chain runs to 414 residues: Phosphoglycerate kinase (414 aa).

(2R)-3-phosphoglycerate is bound by residues Val23, Asp24, Phe25, Asn26, Arg39, Ser62, His63, Gly65, and Arg66. Tyr75 is modified (phosphotyrosine). Ser76 carries the phosphoserine modification. Leu121 and Arg122 together coordinate (2R)-3-phosphoglycerate. Ser143 is subject to Phosphoserine. (2R)-3-phosphoglycerate-binding residues include His168 and Arg169. Phosphoserine occurs at positions 172, 173, and 183. Gly211 contributes to the ADP binding site. Residue Gly211 coordinates CDP. Ala212 and Lys213 together coordinate AMP. Residue Ala212 coordinates ATP. Ala212 is a binding site for Mg(2+). Mg(2+)-binding residues include Ala215 and Asp216. Residue Asp216 participates in CDP binding. Lys217 contacts AMP. Residue Lys217 coordinates ATP. Gly235 is a binding site for ADP. Residue Gly235 coordinates CDP. Gly236 is a binding site for AMP. Gly236 contributes to the ATP binding site. A phosphoserine mark is found at Ser253 and Ser260. Phosphothreonine is present on Thr299. Residue Gly310 coordinates AMP. ATP is bound at residue Gly310. Position 328 is a phosphoserine (Ser328). The CDP site is built by Gly335, Ala337, and Phe340. Phe340 lines the ADP pocket. Glu341 contacts AMP. Glu341 is an ATP binding site. Residue Ser351 is modified to Phosphoserine. The ATP site is built by Asp372 and Thr373. Asp372 is a Mg(2+) binding site. Residue Thr373 is modified to Phosphothreonine. A phosphoserine mark is found at Ser387, Ser390, Ser412, and Ser413.

The protein belongs to the phosphoglycerate kinase family. Monomer. Mg(2+) is required as a cofactor.

Its subcellular location is the cytoplasm. It is found in the mitochondrion. It carries out the reaction (2R)-3-phosphoglycerate + ATP = (2R)-3-phospho-glyceroyl phosphate + ADP. The protein operates within carbohydrate degradation; glycolysis; pyruvate from D-glyceraldehyde 3-phosphate: step 2/5. Functionally, catalyzes one of the two ATP producing reactions in the glycolytic pathway via the reversible conversion of 1,3-diphosphoglycerate to 3-phosphoglycerate. Both L- and D- forms of purine and pyrimidine nucleotides can be used as substrates, but the activity is much lower on pyrimidines. Negatively regulates the biosynthesis of acetyl-CoA from pyruvate in the mitochondrion. The chain is Phosphoglycerate kinase (pgk1) from Schizosaccharomyces pombe (strain 972 / ATCC 24843) (Fission yeast).